The sequence spans 252 residues: 5'-nucleotidase SurE (252 aa).

A divalent metal cation contacts are provided by D8, D9, S39, and N95.

It belongs to the SurE nucleotidase family. It depends on a divalent metal cation as a cofactor.

It localises to the cytoplasm. It carries out the reaction a ribonucleoside 5'-phosphate + H2O = a ribonucleoside + phosphate. Functionally, nucleotidase that shows phosphatase activity on nucleoside 5'-monophosphates. This Thermoanaerobacter sp. (strain X514) protein is 5'-nucleotidase SurE.